A 205-amino-acid chain; its full sequence is Methylthioribulose-1-phosphate dehydratase (205 aa).

His96 and His98 together coordinate Zn(2+).

It belongs to the aldolase class II family. MtnB subfamily. Zn(2+) is required as a cofactor.

The enzyme catalyses 5-(methylsulfanyl)-D-ribulose 1-phosphate = 5-methylsulfanyl-2,3-dioxopentyl phosphate + H2O. It functions in the pathway amino-acid biosynthesis; L-methionine biosynthesis via salvage pathway; L-methionine from S-methyl-5-thio-alpha-D-ribose 1-phosphate: step 2/6. Its function is as follows. Catalyzes the dehydration of methylthioribulose-1-phosphate (MTRu-1-P) into 2,3-diketo-5-methylthiopentyl-1-phosphate (DK-MTP-1-P). The sequence is that of Methylthioribulose-1-phosphate dehydratase from Pseudomonas paraeruginosa (strain DSM 24068 / PA7) (Pseudomonas aeruginosa (strain PA7)).